The sequence spans 1071 residues: MPKRTDLKSILIIGAGPIVIGQACEFDYSGAQACKALREEGYKVILVNSNPATIMTDPEMADVTYIEPIMWQTVEKIIAKERPDAILPTMGGQTXLNCALDLAGNGVLAKYDVELIGATEDAIDKAEDPGRFKEAMEKIGLSCPKSLFCHTMNEALAAQEQVGFPTLIRPSFTMGGSGGGIAYNKDEFLAICERGFDASPTHELLIEQSVLGWKEYEMEVVRDKADNCIIICSIENFDPMGVHTGDSITVAPAETLTDKEYQIMRNASLAVLREIGVDTGGSNVQFAVNPEKGEMIVIEMNPRVSRSSALASKATGFPIAKVAANWAVGFTLDELRNDITGRRTPASFEPSIDYVVTKMARFAFEKFPAADDRLTTQMKSVGEVMAMGRTIQESFQKALRGLETGLCGFNPARRRQTEIRRELANPGPERMLFVGKAFRAAFTPEEIHEISAIDPWFLAQIEDLMKEEKSVSDGQLQDLDYAALHRLKRKGFSDKRLAQLLNVSEKEVRETRTPVKLDPVYKPVDTSAAEFATETAYLYSTYEEECESRPSDRKKVMILGAGPNPIGQGIEFDYCSVHAALPLRESGFETIMVNCNPETVSTDFDTSDRLYFEPLTLEDVLEIVRTENPWGVIVHYGGQTPLKLANALVENGVNIIGTSADSIDAAEDRERFQKVLNDLGLRQPPNRIAHNEEEALVKAEEIGYPLVVRPSYVLGGPAMQIVHSAEALQKYMREPVQVSEDSPVLLDFFLNNAIEVDVDCVSDGKDVVIGGIMQHVEQAGIHSGDSGCSLPPYSLSEEIQDEIRRQTKAMAYALGLVGLMNVQFAVQDAVVFVLEVNPRATRTVPFVSKATGQRLAKVGARCMAGISLKEQGVEKEVVPDFYAVKEAVFPFIKFPGVDTILNPEMRSTGEVMGVGRSFGEAYYKAQLGAGERLNPTGKIFLSVREEDKERVIKTAKNFQALGYGICPTRGTAQYLTEHGLIVQAINKVPEGRPHIGDALKNGEIALVVNTVSSDPQSVSDSHIIRQSALQQRVPQYTTTAGGEAMSEGAKSRDYLGVYSVQELHGRLKNRN.

A carboxyphosphate synthetic domain region spans residues 1–403 (MPKRTDLKSI…SFQKALRGLE (403 aa)). The ATP-grasp 1 domain occupies 133–328 (KEAMEKIGLS…IAKVAANWAV (196 aa)). 11 residues coordinate ATP: R169, G175, G176, Q208, V210, E215, G241, V242, H243, Q285, and E299. Positions 285, 299, and 301 each coordinate Mg(2+). The Mn(2+) site is built by Q285, E299, and N301. The interval 404-548 (TGLCGFNPAR…YSTYEEECES (145 aa)) is oligomerization domain. The carbamoyl phosphate synthetic domain stretch occupies residues 549–930 (RPSDRKKVMI…AYYKAQLGAG (382 aa)). Residues 673-864 (QKVLNDLGLR…LAKVGARCMA (192 aa)) enclose the ATP-grasp 2 domain. Positions 709, 748, 750, 755, 780, 781, 782, 783, 823, and 835 each coordinate ATP. Mg(2+) contacts are provided by Q823, E835, and N837. Residues Q823, E835, and N837 each coordinate Mn(2+). One can recognise an MGS-like domain in the interval 931-1071 (ERLNPTGKIF…ELHGRLKNRN (141 aa)). The allosteric domain stretch occupies residues 931–1071 (ERLNPTGKIF…ELHGRLKNRN (141 aa)).

Belongs to the CarB family. In terms of assembly, composed of two chains; the small (or glutamine) chain promotes the hydrolysis of glutamine to ammonia, which is used by the large (or ammonia) chain to synthesize carbamoyl phosphate. Tetramer of heterodimers (alpha,beta)4. The cofactor is Mg(2+). Mn(2+) serves as cofactor.

The catalysed reaction is hydrogencarbonate + L-glutamine + 2 ATP + H2O = carbamoyl phosphate + L-glutamate + 2 ADP + phosphate + 2 H(+). It catalyses the reaction hydrogencarbonate + NH4(+) + 2 ATP = carbamoyl phosphate + 2 ADP + phosphate + 2 H(+). Its pathway is amino-acid biosynthesis; L-arginine biosynthesis; carbamoyl phosphate from bicarbonate: step 1/1. The protein operates within pyrimidine metabolism; UMP biosynthesis via de novo pathway; (S)-dihydroorotate from bicarbonate: step 1/3. Functionally, large subunit of the glutamine-dependent carbamoyl phosphate synthetase (CPSase). CPSase catalyzes the formation of carbamoyl phosphate from the ammonia moiety of glutamine, carbonate, and phosphate donated by ATP, constituting the first step of 2 biosynthetic pathways, one leading to arginine and/or urea and the other to pyrimidine nucleotides. The large subunit (synthetase) binds the substrates ammonia (free or transferred from glutamine from the small subunit), hydrogencarbonate and ATP and carries out an ATP-coupled ligase reaction, activating hydrogencarbonate by forming carboxy phosphate which reacts with ammonia to form carbamoyl phosphate. The sequence is that of Carbamoyl phosphate synthase large chain from Neisseria gonorrhoeae.